The following is a 140-amino-acid chain: Protein ApaG (140 aa).

The ApaG domain maps to 13–137 (EARTRDIVVR…FSLHLPGAAM (125 aa)).

The sequence is that of Protein ApaG from Caulobacter vibrioides (strain ATCC 19089 / CIP 103742 / CB 15) (Caulobacter crescentus).